Consider the following 188-residue polypeptide: Ribosome-recycling factor (188 aa).

It belongs to the RRF family.

The protein localises to the cytoplasm. Its function is as follows. Responsible for the release of ribosomes from messenger RNA at the termination of protein biosynthesis. May increase the efficiency of translation by recycling ribosomes from one round of translation to another. This chain is Ribosome-recycling factor, found in Caulobacter sp. (strain K31).